Reading from the N-terminus, the 418-residue chain is Probable carboxypeptidase AFLA_000940 (418 aa).

Residues 1–18 (MKATDLFHVTVLVAGALA) form the signal peptide. N-linked (GlcNAc...) asparagine glycosylation is present at Asn-74. Asp-147 is a binding site for Zn(2+). N-linked (GlcNAc...) asparagine glycosylation occurs at Asn-168. Residue Glu-179 is the Proton acceptor of the active site. Glu-180 lines the Zn(2+) pocket.

It belongs to the peptidase M20A family. It depends on Zn(2+) as a cofactor.

It is found in the secreted. This chain is Probable carboxypeptidase AFLA_000940, found in Aspergillus flavus (strain ATCC 200026 / FGSC A1120 / IAM 13836 / NRRL 3357 / JCM 12722 / SRRC 167).